The chain runs to 1026 residues: Multidrug resistance protein MdtC (1026 aa).

The Cytoplasmic portion of the chain corresponds to 1–6 (MRFFAL). The helical transmembrane segment at 7–29 (FIYRPVATILIAAAITLCGILGF) threads the bilayer. Residues 30–335 (RLLPVAPLPQ…TIRASLQEVE (306 aa)) lie on the Periplasmic side of the membrane. Residues 336 to 353 (ETLAISVALVILVVFLFL) traverse the membrane as a helical segment. At 354 to 359 (RSGRAT) the chain is on the cytoplasmic side. A helical transmembrane segment spans residues 360–379 (LIPAVAVPVSLIGTFAAMYL). The Periplasmic segment spans residues 380–388 (CGFSLNNLS). The chain crosses the membrane as a helical span at residues 389–411 (LMALTIATGFVVDDAIVVLENIA). Over 412-430 (RHLEAGMKPLQAALQGTRE) the chain is Cytoplasmic. A helical transmembrane segment spans residues 431–453 (VGFTVISMSLSLVAVFLPLLLMG). Residues 454-467 (GLPGRLLREFAVTL) are Periplasmic-facing. A helical membrane pass occupies residues 468–490 (SVAIGISLVVSLTLTPMMCGWML). At 491–852 (KSSKPRTQPR…QVFQQTMNSQ (362 aa)) the chain is on the cytoplasmic side. Residues 853 to 875 (LILIVAAIATVYIVLGILYESYV) traverse the membrane as a helical segment. Residues 876–894 (HPLTILSTLPSAGVGALLA) lie on the Periplasmic side of the membrane. A helical membrane pass occupies residues 895 to 917 (LELFNAPFSLIALIGIMLLIGIV). Over 918 to 947 (KKNAIMMVDFALEAQRSGGLTPEQAIFQAC) the chain is Cytoplasmic. A helical transmembrane segment spans residues 948–970 (LLRFRPIMMTTLAALFGALPLVL). Residues 971-984 (SGGDGSELRQPLGI) lie on the Periplasmic side of the membrane. A helical transmembrane segment spans residues 985–1007 (TIVGGLVMSQLLTLYTTPVVYLF). At 1008–1026 (FDRLRLRFSRKNSKPVVEI) the chain is on the cytoplasmic side.

Belongs to the resistance-nodulation-cell division (RND) (TC 2.A.6) family. MdtC subfamily. In terms of assembly, part of a tripartite efflux system composed of MdtA, MdtB and MdtC. MdtC forms a heteromultimer with MdtB.

Its subcellular location is the cell inner membrane. The protein is Multidrug resistance protein MdtC of Salmonella typhimurium (strain LT2 / SGSC1412 / ATCC 700720).